The primary structure comprises 448 residues: 3-phosphoshikimate 1-carboxyvinyltransferase (448 aa).

3-phosphoshikimate contacts are provided by Lys38, Ser39, and Arg43. Lys38 serves as a coordination point for phosphoenolpyruvate. The phosphoenolpyruvate site is built by Gly111 and Arg140. Ser185, Gln187, Asp335, and Lys362 together coordinate 3-phosphoshikimate. Gln187 serves as a coordination point for phosphoenolpyruvate. Catalysis depends on Asp335, which acts as the Proton acceptor. 2 residues coordinate phosphoenolpyruvate: Arg366 and Arg408.

This sequence belongs to the EPSP synthase family. In terms of assembly, monomer.

The protein localises to the cytoplasm. The catalysed reaction is 3-phosphoshikimate + phosphoenolpyruvate = 5-O-(1-carboxyvinyl)-3-phosphoshikimate + phosphate. The protein operates within metabolic intermediate biosynthesis; chorismate biosynthesis; chorismate from D-erythrose 4-phosphate and phosphoenolpyruvate: step 6/7. Its function is as follows. Catalyzes the transfer of the enolpyruvyl moiety of phosphoenolpyruvate (PEP) to the 5-hydroxyl of shikimate-3-phosphate (S3P) to produce enolpyruvyl shikimate-3-phosphate and inorganic phosphate. The protein is 3-phosphoshikimate 1-carboxyvinyltransferase of Synechococcus elongatus (strain ATCC 33912 / PCC 7942 / FACHB-805) (Anacystis nidulans R2).